The primary structure comprises 423 residues: Putative competence-damage inducible protein (423 aa).

Belongs to the CinA family.

The chain is Putative competence-damage inducible protein from Streptococcus pyogenes serotype M4 (strain MGAS10750).